The following is a 122-amino-acid chain: MDMHSGTFNPQDFAWQGLTLTPAAAIHIRELVAKQPGMVGVRLGVKQTGCAGFGYVLDSVSEPDKDDLLFEHDGAKLFVPLQAMPFIDGTEVDFVREGLNQIFKFHNPKAQNECGCGESFGV.

The [2Fe-2S] cluster site is built by Cys50, Cys114, and Cys116. [4Fe-4S] cluster-binding residues include Cys50, Cys114, and Cys116.

Belongs to the HesB/IscA family. Homodimer. Interacts with SufB and SufC.

In terms of biological role, member of gene cluster sufABCDSE that mediates iron-sulfur cluster assembly under oxidative stress and iron limitation conditions. Binds [2Fe-2S] and [4Fe-4S] clusters by mobilizing sulfur atoms provided by the SufS-SufE cysteine desulfurase system and then transfers the assembled Fe-S clusters to target proteins including ferredoxin and aconitase. Seems to act as a Fe-S cluster carrier rather than a scaffold, this role being performed by SufB and SufC. The sequence is that of Iron-sulfur cluster assembly protein SufA (sufA) from Escherichia coli (strain K12).